The chain runs to 150 residues: Cytochrome c-type biogenesis protein CcmE (150 aa).

The Cytoplasmic portion of the chain corresponds to 1-7 (MTRKQKR). The chain crosses the membrane as a helical; Signal-anchor for type II membrane protein span at residues 8–28 (LAIIGGGVGFLTAAVLLVMFA). The Periplasmic portion of the chain corresponds to 29 to 150 (FSQAVAYFYV…VTLGGKENIQ (122 aa)). Residues His-123 and Tyr-127 each contribute to the heme site.

This sequence belongs to the CcmE/CycJ family.

The protein localises to the cell inner membrane. Functionally, heme chaperone required for the biogenesis of c-type cytochromes. Transiently binds heme delivered by CcmC and transfers the heme to apo-cytochromes in a process facilitated by CcmF and CcmH. This is Cytochrome c-type biogenesis protein CcmE from Sinorhizobium fredii (strain NBRC 101917 / NGR234).